A 65-amino-acid polypeptide reads, in one-letter code: Large ribosomal subunit protein uL29 (65 aa).

It belongs to the universal ribosomal protein uL29 family.

In Leptothrix cholodnii (strain ATCC 51168 / LMG 8142 / SP-6) (Leptothrix discophora (strain SP-6)), this protein is Large ribosomal subunit protein uL29.